Consider the following 149-residue polypeptide: Gonadotropin subunit beta-2 (149 aa).

Residues 1 to 24 (MARIPECTILLLLCMCVLAVPAQC) form the signal peptide. Cystine bridges form between C30–C78, C44–C93, C47–C131, C55–C109, C59–C111, and C114–C121. N34 is a glycosylation site (N-linked (GlcNAc...) asparagine).

Belongs to the glycoprotein hormones subunit beta family. In terms of assembly, heterodimer of an alpha and a beta chain.

It is found in the secreted. Involved in gametogenesis and steroidogenesis. In Clupea pallasii (Pacific herring), this protein is Gonadotropin subunit beta-2 (cgbb).